A 262-amino-acid chain; its full sequence is MTKQFAVIGNPIEQSRSPELHHAFAEKTGVDLNYQKRLAPLDGFESSMRSFFAEGGSGMNVTVPFKEQAFALCDVLTERAQIAKAVNTLWMENGKLHGDNTDGQGLVAAIQALEWNLENTTILILGAGGATRGVIYPLVQAGAQKIVIANRTLARAEQLVDDLKTAVPQAQLQAISLNDLEGDFDIMINATSTSLSGDALQLPEKLQFKYAYEMAYGKPSSFIDQAKQRNVPYAEGFGMLVGQAIEAFYIWNGVRPQLKDFL.

Shikimate contacts are provided by residues 15–17 (SRS) and Thr62. Lys66 functions as the Proton acceptor in the catalytic mechanism. Glu78 contributes to the NADP(+) binding site. Shikimate-binding residues include Asn87 and Asp102. NADP(+) contacts are provided by residues 126-130 (GAGGA), 150-155 (NRTLAR), and Met214. Tyr216 contributes to the shikimate binding site. Gly236 serves as a coordination point for NADP(+).

The protein belongs to the shikimate dehydrogenase family. Homodimer.

The catalysed reaction is shikimate + NADP(+) = 3-dehydroshikimate + NADPH + H(+). The protein operates within metabolic intermediate biosynthesis; chorismate biosynthesis; chorismate from D-erythrose 4-phosphate and phosphoenolpyruvate: step 4/7. In terms of biological role, involved in the biosynthesis of the chorismate, which leads to the biosynthesis of aromatic amino acids. Catalyzes the reversible NADPH linked reduction of 3-dehydroshikimate (DHSA) to yield shikimate (SA). The protein is Shikimate dehydrogenase (NADP(+)) of Acinetobacter baumannii (strain AB307-0294).